The primary structure comprises 459 residues: Argininosuccinate lyase (459 aa).

This sequence belongs to the lyase 1 family. Argininosuccinate lyase subfamily.

The protein localises to the cytoplasm. The enzyme catalyses 2-(N(omega)-L-arginino)succinate = fumarate + L-arginine. The protein operates within amino-acid biosynthesis; L-arginine biosynthesis; L-arginine from L-ornithine and carbamoyl phosphate: step 3/3. The protein is Argininosuccinate lyase of Geobacillus kaustophilus (strain HTA426).